We begin with the raw amino-acid sequence, 603 residues long: Complement factor I (603 aa).

Residues 1-18 (MKLAHLSLFLLALHLSSS) form the signal peptide. Cystine bridges form between Cys36–Cys260, Cys46–Cys57, Cys51–Cys62, Cys64–Cys96, Cys70–Cys89, Cys78–Cys109, Cys144–Cys186, Cys157–Cys219, Cys191–Cys201, Cys234–Cys252, Cys246–Cys261, Cys264–Cys276, Cys271–Cys289, Cys283–Cys298, Cys348–Cys473, Cys386–Cys402, Cys394–Cys464, Cys487–Cys551, Cys515–Cys530, and Cys541–Cys570. Residues 58–111 (IEGTCICKLPYQCPRAGTPVCAMNGRSYPTYCHQKSFECLHPEIKFSHNGTCAA) enclose the Kazal-like domain. 4 N-linked (GlcNAc...) asparagine glycosylation sites follow: Asn106, Asn116, Asn174, and Asn182. The SRCR domain occupies 117–217 (VSLIYGRTKT…TELSNGLAGV (101 aa)). 2 consecutive LDL-receptor class A domains span residues 218 to 262 (VCYK…LCCK) and 263 to 299 (GCRG…SRCE). Lys244, Asn247, Val249, Asp251, Asp257, and Glu258 together coordinate Ca(2+). Asn267 carries an N-linked (GlcNAc...) asparagine glycan. The Ca(2+) site is built by Tyr281, Asn284, Glu286, Asp288, Asp294, and Glu295. The 234-residue stretch at 361–594 (VIGGKPANVG…YFDWISYHVG (234 aa)) folds into the Peptidase S1 domain. Active-site charge relay system residues include His401 and Asp449. Asn514 carries N-linked (GlcNAc...) asparagine glycosylation. Ser545 functions as the Charge relay system in the catalytic mechanism. A glycan (N-linked (GlcNAc...) asparagine) is linked at Asn556.

This sequence belongs to the peptidase S1 family. As to quaternary structure, heterodimer of a light and heavy chains; disulfide-linked. The fully processed and mature protein circulates as a zymogen, and is allosterically activated by substrate-induced remodeling of the active site. Interacts with C3b. Interacts with complement factor H. In terms of tissue distribution, expressed in the liver by hepatocytes. Also present in other cells such as monocytes, fibroblasts or keratinocytes.

It is found in the secreted. The protein resides in the extracellular space. It catalyses the reaction Inactivates complement subcomponents C3b, iC3b and C4b by proteolytic cleavage.. Its function is as follows. Trypsin-like serine protease that plays an essential role in regulating the immune response by controlling all complement pathways. Inhibits these pathways by cleaving three peptide bonds in the alpha-chain of C3b and two bonds in the alpha-chain of C4b thereby inactivating these proteins. Essential cofactors for these reactions include factor H and C4BP in the fluid phase and membrane cofactor protein/CD46 and CR1 on cell surfaces. The presence of these cofactors on healthy cells allows degradation of deposited C3b by CFI in order to prevent undesired complement activation, while in apoptotic cells or microbes, the absence of such cofactors leads to C3b-mediated complement activation and subsequent opsonization. The polypeptide is Complement factor I (Cfi) (Mus musculus (Mouse)).